The sequence spans 783 residues: Zinc finger protein 107 (783 aa).

The C2H2-type 1; atypical zinc finger occupies 76–98 (FQCNKYVKVFDKFSNSNRYKRRH). C2H2-type zinc fingers lie at residues 104 to 126 (FKCK…RRIH), 132 to 154 (YKCE…KRIH), and 160 to 182 (YKCE…KIIH). A Glycyl lysine isopeptide (Lys-Gly) (interchain with G-Cter in SUMO2) cross-link involves residue K186. The C2H2-type 5 zinc-finger motif lies at 188–210 (NKCEECGKAFKQASHLTIHKIIH). The C2H2-type 6; atypical zinc finger occupies 216-238 (YKYEECGKVFSQSSHLTTQKILH). A C2H2-type 7 zinc finger spans residues 244-266 (YKCKECGKAFNLFSNLTNHKRIH). The segment at 272 to 294 (YKCKECGRAFNISSNLNKQEKIH) adopts a C2H2-type 8; atypical zinc-finger fold. The C2H2-type 9; atypical zinc-finger motif lies at 300-322 (NKCEECDKAFNRSLKLTAHKKIL). C2H2-type zinc fingers lie at residues 328–350 (YKCE…KIIH) and 356–378 (YKCK…KKIH). The segment at 384-406 (YKCEECGKAFNQHSNLINHRKIY) adopts a C2H2-type 12; atypical zinc-finger fold. 4 C2H2-type zinc fingers span residues 412-434 (YKCE…KKIH), 440-462 (YKCE…KKIH), 468-490 (YKCE…KRIH), and 496-518 (YKCE…KIVH). The segment at 524-546 (NKCEEFGKAFKQSSHRTIHKIIH) adopts a C2H2-type 17; atypical zinc-finger fold. The C2H2-type 18; atypical zinc-finger motif lies at 552–574 (YKCEEHGKVFNQSSNLTTQKIIH). Residues 580–602 (YKFEEHGKAFNLFSNITNHKIIY) form a C2H2-type 19; atypical zinc finger. 5 C2H2-type zinc fingers span residues 608–630 (HKCE…KRIH), 636–658 (YQCA…KIIH), 664–686 (YKCK…KKIH), 692–714 (YKCE…KKIH), and 720–742 (YKCE…KIIH). The segment at 748–770 (YKCGDYGRAFNLSSNLTTHKKIH) adopts a C2H2-type 25; atypical zinc-finger fold.

This sequence belongs to the krueppel C2H2-type zinc-finger protein family. In terms of tissue distribution, expressed in brain, heart, skeletal muscle, kidney and pancreas. Weakly expressed in aorta, liver and lung.

It localises to the nucleus. Functionally, may be involved in transcriptional regulation. The polypeptide is Zinc finger protein 107 (ZNF107) (Homo sapiens (Human)).